A 231-amino-acid chain; its full sequence is Large ribosomal subunit protein uL1 (231 aa).

The protein belongs to the universal ribosomal protein uL1 family. In terms of assembly, part of the 50S ribosomal subunit.

In terms of biological role, binds directly to 23S rRNA. The L1 stalk is quite mobile in the ribosome, and is involved in E site tRNA release. Protein L1 is also a translational repressor protein, it controls the translation of the L11 operon by binding to its mRNA. This is Large ribosomal subunit protein uL1 from Ralstonia pickettii (strain 12J).